The sequence spans 492 residues: 3-ketoacyl-CoA synthase 5 (492 aa).

The next 2 membrane-spanning stretches (helical) occupy residues 20–40 and 59–79; these read LINNFLTLLLIPVIATVAIEL and LLHILCSSFLIIFVSTVYFMS. The region spanning 76–365 is the FAE domain; the sequence is YFMSKPRTVY…FLSSLIGRKI (290 aa). Active-site residues include cysteine 220, histidine 299, histidine 383, histidine 387, histidine 416, and asparagine 420.

It belongs to the thiolase-like superfamily. Chalcone/stilbene synthases family. As to expression, expressed in siliques, flowers, leaves and seedlings.

The protein localises to the membrane. It carries out the reaction a very-long-chain acyl-CoA + malonyl-CoA + H(+) = a very-long-chain 3-oxoacyl-CoA + CO2 + CoA. It participates in lipid metabolism; fatty acid biosynthesis. Its activity is regulated as follows. Inhibited by K3 herbicides such as alachlor, allidochlor, anilofos, cafenstrole and flufenacet. Strongly inhibited by metazachlor and mefluidide. In terms of biological role, mediates mostly the synthesis of VLCFAs from 26 to 30 carbons in length (e.g. C20:1, C26, C28, C30). The protein is 3-ketoacyl-CoA synthase 5 of Arabidopsis thaliana (Mouse-ear cress).